A 237-amino-acid polypeptide reads, in one-letter code: LexA repressor (237 aa).

The span at 1–12 (MPVKDSSSNKKN) shows a compositional bias: polar residues. Positions 1–20 (MPVKDSSSNKKNQIGKLSER) are disordered. Positions 41–61 (IREIGDAAGLQSTSSVAYQLK) form a DNA-binding region, H-T-H motif. Residues 67 to 80 (GYLRRDPNKPRAVD) show a composition bias toward basic and acidic residues. Positions 67–112 (GYLRRDPNKPRAVDVRALPDPIPSKPGRKPGPKKSSVAISPDPAET) are disordered. Residues Ser161 and Lys198 each act as for autocatalytic cleavage activity in the active site.

It belongs to the peptidase S24 family. As to quaternary structure, homodimer.

It carries out the reaction Hydrolysis of Ala-|-Gly bond in repressor LexA.. Functionally, represses a number of genes involved in the response to DNA damage (SOS response), including recA and lexA. In the presence of single-stranded DNA, RecA interacts with LexA causing an autocatalytic cleavage which disrupts the DNA-binding part of LexA, leading to derepression of the SOS regulon and eventually DNA repair. This chain is LexA repressor, found in Corynebacterium diphtheriae (strain ATCC 700971 / NCTC 13129 / Biotype gravis).